The sequence spans 407 residues: Leucine-rich repeat-containing protein 42 (407 aa).

5 LRR repeats span residues 138–159 (VLKS…EEIR), 163–184 (SLEC…FKYI), 191–211 (SLVK…QRLT), 223–243 (NLQL…RYLT), and 247–268 (TLQK…KGFF). The segment at 360-389 (VQSSPSGETHSTHKSRKRRLSTEEEQSAAP) is disordered.

This sequence belongs to the LRRC42 family.

The chain is Leucine-rich repeat-containing protein 42 (lrrc42) from Danio rerio (Zebrafish).